We begin with the raw amino-acid sequence, 190 residues long: Threonylcarbamoyl-AMP synthase (190 aa).

Residues 7 to 190 form the YrdC-like domain; sequence RAALSDVLQA…ALTGKQFRQG (184 aa).

This sequence belongs to the SUA5 family. TsaC subfamily.

The protein resides in the cytoplasm. The enzyme catalyses L-threonine + hydrogencarbonate + ATP = L-threonylcarbamoyladenylate + diphosphate + H2O. Required for the formation of a threonylcarbamoyl group on adenosine at position 37 (t(6)A37) in tRNAs that read codons beginning with adenine. Catalyzes the conversion of L-threonine, HCO(3)(-)/CO(2) and ATP to give threonylcarbamoyl-AMP (TC-AMP) as the acyladenylate intermediate, with the release of diphosphate. The protein is Threonylcarbamoyl-AMP synthase of Yersinia enterocolitica serotype O:8 / biotype 1B (strain NCTC 13174 / 8081).